The sequence spans 120 residues: NAD(P)H-quinone oxidoreductase subunit 3, chloroplastic (120 aa).

The next 3 membrane-spanning stretches (helical) occupy residues 7 to 27, 64 to 84, and 88 to 108; these read YDTF…AFSI, MFAL…PWAM, and ILGL…IVGL.

The protein belongs to the complex I subunit 3 family. NDH is composed of at least 16 different subunits, 5 of which are encoded in the nucleus.

The protein localises to the plastid. The protein resides in the chloroplast thylakoid membrane. The catalysed reaction is a plastoquinone + NADH + (n+1) H(+)(in) = a plastoquinol + NAD(+) + n H(+)(out). It catalyses the reaction a plastoquinone + NADPH + (n+1) H(+)(in) = a plastoquinol + NADP(+) + n H(+)(out). In terms of biological role, NDH shuttles electrons from NAD(P)H:plastoquinone, via FMN and iron-sulfur (Fe-S) centers, to quinones in the photosynthetic chain and possibly in a chloroplast respiratory chain. The immediate electron acceptor for the enzyme in this species is believed to be plastoquinone. Couples the redox reaction to proton translocation, and thus conserves the redox energy in a proton gradient. The polypeptide is NAD(P)H-quinone oxidoreductase subunit 3, chloroplastic (Cryptomeria japonica (Japanese cedar)).